A 359-amino-acid chain; its full sequence is Peptide chain release factor 1 (359 aa).

Residue Gln-236 is modified to N5-methylglutamine.

The protein belongs to the prokaryotic/mitochondrial release factor family. Methylated by PrmC. Methylation increases the termination efficiency of RF1.

Its subcellular location is the cytoplasm. Peptide chain release factor 1 directs the termination of translation in response to the peptide chain termination codons UAG and UAA. The polypeptide is Peptide chain release factor 1 (prfA) (Mycoplasma pneumoniae (strain ATCC 29342 / M129 / Subtype 1) (Mycoplasmoides pneumoniae)).